Here is a 388-residue protein sequence, read N- to C-terminus: MNIHEYQGKEIFRSMGVAVPEGRVAFTAEEAVEKAKELNSDVYVVKAQIHAGGRGKAGGVKITKSLSEVETYAKELLGKTLVTHQTGPEGKEIKRLYIEEGCAIQKEYYVGFVIDRATDQVTLMASEEGGTEIEEVAAKTPEKIFKETIDPVIGLSPFQARRIAFNINIPKESVNKAAKFLLALYNVFIEKDCSIVEINPLVTTADGDVLALDAKINFDDNALFRHKDVVELRDLEEEDPKEIEASKHDLSYIALDGDIGCMVNGAGLAMATMDTINHFGGNPANFLDAGGSATREKVTEAFKIILGDENVKGIFVNIFGGIMKCDVIAEGIVEAVKEVDLTLPLVVRLEGTNVELGKKILKDSGLAIEPAATMAEGAQKIVKLVKEA.

In terms of domain architecture, ATP-grasp spans 9–244 (KEIFRSMGVA…LEEEDPKEIE (236 aa)). ATP is bound by residues lysine 46, 53 to 55 (GRG), glutamate 99, cysteine 102, and glutamate 107. Residues asparagine 199 and aspartate 213 each contribute to the Mg(2+) site. Residues asparagine 264 and 321–323 (GIM) each bind substrate.

It belongs to the succinate/malate CoA ligase beta subunit family. In terms of assembly, heterotetramer of two alpha and two beta subunits. The cofactor is Mg(2+).

The enzyme catalyses succinate + ATP + CoA = succinyl-CoA + ADP + phosphate. It catalyses the reaction GTP + succinate + CoA = succinyl-CoA + GDP + phosphate. It functions in the pathway carbohydrate metabolism; tricarboxylic acid cycle; succinate from succinyl-CoA (ligase route): step 1/1. Functionally, succinyl-CoA synthetase functions in the citric acid cycle (TCA), coupling the hydrolysis of succinyl-CoA to the synthesis of either ATP or GTP and thus represents the only step of substrate-level phosphorylation in the TCA. The beta subunit provides nucleotide specificity of the enzyme and binds the substrate succinate, while the binding sites for coenzyme A and phosphate are found in the alpha subunit. This chain is Succinate--CoA ligase [ADP-forming] subunit beta, found in Staphylococcus aureus (strain MRSA252).